The following is a 283-amino-acid chain: Nopaline-binding periplasmic protein (283 aa).

Positions 1-25 are cleaved as a signal peptide; sequence MKFFNLNALAAVVTGVLLAAGPTQA. Cysteine 63 and cysteine 70 form a disulfide bridge.

Belongs to the bacterial solute-binding protein 3 family.

The protein localises to the periplasm. In terms of biological role, component of the nopaline active transport system probably consisting of four subunits: Q, M, P and T. This system is also capable of transporting octopine provided that catabolic functions are induced with nopaline. This Agrobacterium fabrum (strain C58 / ATCC 33970) (Agrobacterium tumefaciens (strain C58)) protein is Nopaline-binding periplasmic protein (nocT).